A 350-amino-acid chain; its full sequence is Biotin synthase (350 aa).

Positions 38–257 (NKVQVSTLLS…AVARIIMPMS (220 aa)) constitute a Radical SAM core domain. Cys53, Cys57, and Cys60 together coordinate [4Fe-4S] cluster. 4 residues coordinate [2Fe-2S] cluster: Cys97, Cys128, Cys188, and Arg260.

It belongs to the radical SAM superfamily. Biotin synthase family. Homodimer. It depends on [4Fe-4S] cluster as a cofactor. [2Fe-2S] cluster is required as a cofactor.

The enzyme catalyses (4R,5S)-dethiobiotin + (sulfur carrier)-SH + 2 reduced [2Fe-2S]-[ferredoxin] + 2 S-adenosyl-L-methionine = (sulfur carrier)-H + biotin + 2 5'-deoxyadenosine + 2 L-methionine + 2 oxidized [2Fe-2S]-[ferredoxin]. It functions in the pathway cofactor biosynthesis; biotin biosynthesis; biotin from 7,8-diaminononanoate: step 2/2. Its function is as follows. Catalyzes the conversion of dethiobiotin (DTB) to biotin by the insertion of a sulfur atom into dethiobiotin via a radical-based mechanism. The protein is Biotin synthase of Photobacterium profundum (strain SS9).